We begin with the raw amino-acid sequence, 199 residues long: NADH-quinone oxidoreductase subunit C (199 aa).

This sequence belongs to the complex I 30 kDa subunit family. In terms of assembly, NDH-1 is composed of 14 different subunits. Subunits NuoB, C, D, E, F, and G constitute the peripheral sector of the complex.

The protein localises to the cell inner membrane. The enzyme catalyses a quinone + NADH + 5 H(+)(in) = a quinol + NAD(+) + 4 H(+)(out). Functionally, NDH-1 shuttles electrons from NADH, via FMN and iron-sulfur (Fe-S) centers, to quinones in the respiratory chain. The immediate electron acceptor for the enzyme in this species is believed to be ubiquinone. Couples the redox reaction to proton translocation (for every two electrons transferred, four hydrogen ions are translocated across the cytoplasmic membrane), and thus conserves the redox energy in a proton gradient. The sequence is that of NADH-quinone oxidoreductase subunit C from Cupriavidus metallidurans (strain ATCC 43123 / DSM 2839 / NBRC 102507 / CH34) (Ralstonia metallidurans).